Consider the following 230-residue polypeptide: Aquaporin Z (230 aa).

Transmembrane regions (helical) follow at residues Ala-9–Ala-29 and Ile-35–Ile-55. The NPA 1 signature appears at Asn-64–Ala-66. 3 helical membrane passes run Leu-83–Ile-103, Leu-131–Gly-151, and Gly-160–Val-180. Positions Asn-186–Ala-188 match the NPA 2 motif. The helical transmembrane segment at Ala-194–Ile-214 threads the bilayer.

Belongs to the MIP/aquaporin (TC 1.A.8) family. Homotetramer.

It is found in the cell inner membrane. It catalyses the reaction H2O(in) = H2O(out). Channel that permits osmotically driven movement of water in both directions. It is involved in the osmoregulation and in the maintenance of cell turgor during volume expansion in rapidly growing cells. It mediates rapid entry or exit of water in response to abrupt changes in osmolarity. In Pseudomonas putida (strain ATCC 47054 / DSM 6125 / CFBP 8728 / NCIMB 11950 / KT2440), this protein is Aquaporin Z.